Consider the following 237-residue polypeptide: Small ribosomal subunit protein uS17m (237 aa).

Belongs to the universal ribosomal protein uS17 family. As to quaternary structure, component of the mitochondrial small ribosomal subunit (mt-SSU). Mature yeast 74S mitochondrial ribosomes consist of a small (37S) and a large (54S) subunit. The 37S small subunit contains a 15S ribosomal RNA (15S mt-rRNA) and 34 different proteins. The 54S large subunit contains a 21S rRNA (21S mt-rRNA) and 46 different proteins.

It is found in the mitochondrion. In terms of biological role, component of the mitochondrial ribosome (mitoribosome), a dedicated translation machinery responsible for the synthesis of mitochondrial genome-encoded proteins, including at least some of the essential transmembrane subunits of the mitochondrial respiratory chain. The mitoribosomes are attached to the mitochondrial inner membrane and translation products are cotranslationally integrated into the membrane. uS17m may have a meiosis-specific role as it accumulates during the middle stage of sporulation. The sequence is that of Small ribosomal subunit protein uS17m (MRPS17) from Saccharomyces cerevisiae (strain ATCC 204508 / S288c) (Baker's yeast).